The sequence spans 157 residues: Protein Smg homolog (157 aa).

The protein belongs to the Smg family.

The chain is Protein Smg homolog from Xanthomonas oryzae pv. oryzae (strain MAFF 311018).